The following is a 342-amino-acid chain: Phosphoribosylformylglycinamidine cyclo-ligase (342 aa).

It belongs to the AIR synthase family.

The protein localises to the cytoplasm. It catalyses the reaction 2-formamido-N(1)-(5-O-phospho-beta-D-ribosyl)acetamidine + ATP = 5-amino-1-(5-phospho-beta-D-ribosyl)imidazole + ADP + phosphate + H(+). It functions in the pathway purine metabolism; IMP biosynthesis via de novo pathway; 5-amino-1-(5-phospho-D-ribosyl)imidazole from N(2)-formyl-N(1)-(5-phospho-D-ribosyl)glycinamide: step 2/2. The sequence is that of Phosphoribosylformylglycinamidine cyclo-ligase from Staphylococcus aureus (strain MRSA252).